Consider the following 436-residue polypeptide: ATP-dependent RNA helicase SUB2 (436 aa).

A compositionally biased stretch (acidic residues) spans 1-16 (MSAEEDLIDYSDEELN). The disordered stretch occupies residues 1 to 33 (MSAEEDLIDYSDEELNTNETAAPAADSNGKKGE). Positions 52 to 80 (TGFRDFLLKPELLRAIGDCGFEHPSEVQQ) match the Q motif motif. Positions 83-258 (IPQAMLGGDI…KKFMQNPTEH (176 aa)) constitute a Helicase ATP-binding domain. An ATP-binding site is contributed by 96–103 (AKSGLGKT). Positions 205-208 (DECD) match the DEAD box motif. Positions 270–431 (GLQQYFVALE…EFPKDGIDAS (162 aa)) constitute a Helicase C-terminal domain.

Belongs to the DEAD box helicase family. DECD subfamily.

The protein resides in the nucleus. The catalysed reaction is ATP + H2O = ADP + phosphate + H(+). Its function is as follows. ATP-binding RNA helicase involved in transcription elongation and required for the export of mRNA out of the nucleus. SUB2 also plays a role in pre-mRNA splicing and spliceosome assembly. May be involved in rDNA and telomeric silencing, and maintenance of genome integrity. This Pyricularia oryzae (strain 70-15 / ATCC MYA-4617 / FGSC 8958) (Rice blast fungus) protein is ATP-dependent RNA helicase SUB2 (SUB2).